The sequence spans 171 residues: Large ribosomal subunit protein bL9 (171 aa).

It belongs to the bacterial ribosomal protein bL9 family.

Binds to the 23S rRNA. The polypeptide is Large ribosomal subunit protein bL9 (Rickettsia prowazekii (strain Madrid E)).